The sequence spans 409 residues: Short chain dehydrogenase sirS (409 aa).

NADP(+) contacts are provided by Val49, Leu68, Lys195, Val288, Thr290, and Ala299. The disordered stretch occupies residues 306 to 332 (GVGPEGAGEEEGKGEAEGGAKGATGWS).

The protein belongs to the short-chain dehydrogenases/reductases (SDR) family. Highly divergent.

The protein operates within mycotoxin biosynthesis. Short chain dehydrogenase; part of the gene cluster that mediates the biosynthesis of sirodesmin PL, an epipolythiodioxopiperazine (ETP) characterized by a disulfide bridged cyclic dipeptide and that acts as a phytotoxin which is involved in the blackleg didease of canola. SirD catalyzes the O-prenylation of L-tyrosine (L-Tyr) in the presence of dimethylallyl diphosphate (DMAPP) to yield 4-O-dimethylallyl-L-Tyr, and therefore represents probably the first pathway-specific enzyme in the biosynthesis of sirodesmin PL. 4-O-dimethylallyl-L-Tyr, then undergoes condensation with L-Ser in a reaction catalyzed by the non-ribosomal peptide synthase sirP to form the diketopiperazine (DKP) backbone. Further bishydroxylation of the DKP performed by the cytochrome P450 monooxygenase sirC leads to the production of the intermediate phomamide. This step is essential to form the reactive thiol group required for toxicity of sirodesmin PL. The next steps of sirodesmin biosynthesis are not well understood yet, but some predictions could be made from intermediate compounds identification. Phomamide is converted into phomalizarine via oxidation, probably by sirT. Further oxidation, methylation (by sirM or sirN) and reduction steps convert phomalizarine to deacetyl sirodesmin. Finally, acetyltransferase sirH probably acetylates deacetyl sirodesmin to produce sirodesmin PL. The polypeptide is Short chain dehydrogenase sirS (Leptosphaeria maculans (Blackleg fungus)).